The sequence spans 427 residues: Large ribosomal subunit protein uL4 (427 aa).

Ala2 carries the post-translational modification N-acetylalanine. Lys14 carries the N6-acetyllysine modification. An Omega-N-methylarginine modification is found at Arg97. Lys106 bears the N6-acetyllysine mark. A Glycyl lysine isopeptide (Lys-Gly) (interchain with G-Cter in SUMO2) cross-link involves residue Lys239. The residue at position 259 (Lys259) is an N6-acetyllysine. At Thr266 the chain carries Phosphothreonine. A phosphoserine mark is found at Ser290 and Ser295. Arg300 carries the citrulline modification. A Glycyl lysine isopeptide (Lys-Gly) (interchain with G-Cter in SUMO2) cross-link involves residue Lys327. Lys333 and Lys353 each carry N6-acetyllysine. Lys364 carries the N6-acetyllysine; alternate modification. Lys364 is covalently cross-linked (Glycyl lysine isopeptide (Lys-Gly) (interchain with G-Cter in SUMO1); alternate). At Ser365 the chain carries Phosphoserine. Positions 369–427 (AAVAGKKPVVGKKGKKAAVGVKKQKKPLVGKKAAATKKPAPEKKPAEKKPTTEEKKPAA) are disordered. Over residues 377-397 (VVGKKGKKAAVGVKKQKKPLV) the composition is skewed to basic residues. A compositionally biased stretch (basic and acidic residues) spans 407–427 (PAPEKKPAEKKPTTEEKKPAA).

The protein belongs to the universal ribosomal protein uL4 family. In terms of assembly, component of the large ribosomal subunit. May bind IPO9 with low affinity. Interacts with RBM3. Citrullinated by PADI4.

It is found in the cytoplasm. Component of the large ribosomal subunit. The ribosome is a large ribonucleoprotein complex responsible for the synthesis of proteins in the cell. The sequence is that of Large ribosomal subunit protein uL4 (RPL4) from Pongo abelii (Sumatran orangutan).